Here is a 41-residue protein sequence, read N- to C-terminus: Peptide Hact-SCRiP1 (41 aa).

4 cysteine pairs are disulfide-bonded: C5/C37, C12/C31, C19/C38, and C26/C39.

As to expression, expressed in tentacles.

It localises to the nematocyst. The protein resides in the secreted. In terms of biological role, peptide with unknown function. Does not exhibit any effect on human ion channel TRPV1 in a Xenopus laevis oocytes assay. The protein is Peptide Hact-SCRiP1 of Heliofungia actiniformis (Mushroom coral).